A 249-amino-acid polypeptide reads, in one-letter code: Enolase-phosphatase E1 (249 aa).

This sequence belongs to the HAD-like hydrolase superfamily. MasA/MtnC family. As to quaternary structure, monomer. The cofactor is Mg(2+).

It carries out the reaction 5-methylsulfanyl-2,3-dioxopentyl phosphate + H2O = 1,2-dihydroxy-5-(methylsulfanyl)pent-1-en-3-one + phosphate. It functions in the pathway amino-acid biosynthesis; L-methionine biosynthesis via salvage pathway; L-methionine from S-methyl-5-thio-alpha-D-ribose 1-phosphate: step 3/6. It participates in amino-acid biosynthesis; L-methionine biosynthesis via salvage pathway; L-methionine from S-methyl-5-thio-alpha-D-ribose 1-phosphate: step 4/6. Its function is as follows. Bifunctional enzyme that catalyzes the enolization of 2,3-diketo-5-methylthiopentyl-1-phosphate (DK-MTP-1-P) into the intermediate 2-hydroxy-3-keto-5-methylthiopentenyl-1-phosphate (HK-MTPenyl-1-P), which is then dephosphorylated to form the acireductone 1,2-dihydroxy-3-keto-5-methylthiopentene (DHK-MTPene). This Pseudomonas aeruginosa (strain ATCC 15692 / DSM 22644 / CIP 104116 / JCM 14847 / LMG 12228 / 1C / PRS 101 / PAO1) protein is Enolase-phosphatase E1.